A 493-amino-acid polypeptide reads, in one-letter code: Mitochondrial distribution and morphology protein 10 (493 aa).

It belongs to the MDM10 family. Component of the ER-mitochondria encounter structure (ERMES) or MDM complex, composed of MMM1, MDM10, MDM12 and MDM34. Associates with the mitochondrial outer membrane sorting assembly machinery SAM(core) complex, which consists of SAM35, SAM37 and SAM50, to form a SAM(holo) complex.

The protein resides in the mitochondrion outer membrane. Component of the ERMES/MDM complex, which serves as a molecular tether to connect the endoplasmic reticulum and mitochondria. Components of this complex are involved in the control of mitochondrial shape and protein biogenesis and may function in phospholipid exchange. MDM10 is involved in the late assembly steps of the general translocase of the mitochondrial outer membrane (TOM complex). Functions in the TOM40-specific route of the assembly of outer membrane beta-barrel proteins, including the association of TOM40 with the receptor TOM22 and small TOM proteins. Can associate with the SAM(core) complex as well as the MDM12-MMM1 complex, both involved in late steps of the major beta-barrel assembly pathway, that is responsible for biogenesis of all outer membrane beta-barrel proteins. May act as a switch that shuttles between both complexes and channels precursor proteins into the TOM40-specific pathway. Plays a role in mitochondrial morphology and in the inheritance of mitochondria. The chain is Mitochondrial distribution and morphology protein 10 from Saccharomyces cerevisiae (strain YJM789) (Baker's yeast).